A 300-amino-acid chain; its full sequence is Tyrosine recombinase XerC (300 aa).

The 87-residue stretch at 2-88 (TQEGKLEQQF…SLRSFYTFLL (87 aa)) folds into the Core-binding (CB) domain. In terms of domain architecture, Tyr recombinase spans 109–294 (RLPKFFYSEE…TKEHLKSTYM (186 aa)). Catalysis depends on residues Arg150, Lys174, His246, Arg249, and His272. The O-(3'-phospho-DNA)-tyrosine intermediate role is filled by Tyr281.

This sequence belongs to the 'phage' integrase family. XerC subfamily. In terms of assembly, forms a cyclic heterotetrameric complex composed of two molecules of XerC and two molecules of XerD.

The protein localises to the cytoplasm. Its function is as follows. Site-specific tyrosine recombinase, which acts by catalyzing the cutting and rejoining of the recombining DNA molecules. The XerC-XerD complex is essential to convert dimers of the bacterial chromosome into monomers to permit their segregation at cell division. It also contributes to the segregational stability of plasmids. This chain is Tyrosine recombinase XerC, found in Listeria welshimeri serovar 6b (strain ATCC 35897 / DSM 20650 / CCUG 15529 / CIP 8149 / NCTC 11857 / SLCC 5334 / V8).